A 558-amino-acid chain; its full sequence is CTP synthase (558 aa).

The tract at residues 1 to 266 (MSAKYIFVTG…DRLVMKYLRL (266 aa)) is amidoligase domain. Serine 14 is a CTP binding site. Serine 14 contacts UTP. ATP-binding positions include 15 to 20 (SLGKGL) and aspartate 72. Aspartate 72 and glutamate 140 together coordinate Mg(2+). Residues 147–149 (DIE), 187–192 (KTKPTQ), and lysine 223 each bind CTP. UTP-binding positions include 187-192 (KTKPTQ) and lysine 223. 239–241 (KDV) serves as a coordination point for ATP. Residues 291–537 (IIGIIGKYVE…IGASYEHRMK (247 aa)) form the Glutamine amidotransferase type-1 domain. Glycine 355 lines the L-glutamine pocket. The active-site Nucleophile; for glutamine hydrolysis is cysteine 382. L-glutamine contacts are provided by residues 383–386 (LGMQ), glutamate 406, and arginine 463. Residues histidine 510 and glutamate 512 contribute to the active site. A disordered region spans residues 539–558 (THTKEREEESVFLRPERVGK). Over residues 542–558 (KEREEESVFLRPERVGK) the composition is skewed to basic and acidic residues.

It belongs to the CTP synthase family. In terms of assembly, homotetramer.

The enzyme catalyses UTP + L-glutamine + ATP + H2O = CTP + L-glutamate + ADP + phosphate + 2 H(+). It carries out the reaction L-glutamine + H2O = L-glutamate + NH4(+). It catalyses the reaction UTP + NH4(+) + ATP = CTP + ADP + phosphate + 2 H(+). Its pathway is pyrimidine metabolism; CTP biosynthesis via de novo pathway; CTP from UDP: step 2/2. Its activity is regulated as follows. Allosterically activated by GTP, when glutamine is the substrate; GTP has no effect on the reaction when ammonia is the substrate. The allosteric effector GTP functions by stabilizing the protein conformation that binds the tetrahedral intermediate(s) formed during glutamine hydrolysis. Inhibited by the product CTP, via allosteric rather than competitive inhibition. In terms of biological role, catalyzes the ATP-dependent amination of UTP to CTP with either L-glutamine or ammonia as the source of nitrogen. Regulates intracellular CTP levels through interactions with the four ribonucleotide triphosphates. This Koribacter versatilis (strain Ellin345) protein is CTP synthase.